The chain runs to 411 residues: MMP alpha-(1-&gt;4)-mannosyltransferase (411 aa).

The protein belongs to the glycosyltransferase group 1 family. Glycosyltransferase 4 subfamily.

It carries out the reaction [3-O-methyl-alpha-D-mannosyl-(1-&gt;4)](n)-3-O-methyl-D-mannose + GDP-alpha-D-mannose = alpha-D-mannosyl-(1-&gt;4)-[3-O-methyl-alpha-D-mannosyl-(1-&gt;4)](n)-3-O-methyl-D-mannose + GDP + H(+). It catalyses the reaction [3-O-methyl-alpha-D-mannosyl-(1-&gt;4)](n)-1-O,3-O-dimethyl-alpha-D-mannose + GDP-alpha-D-mannose = alpha-D-mannosyl-(1-&gt;4)-[3-O-methyl-alpha-D-mannosyl-(1-&gt;4)](n)-1-O,3-O-dimethyl-alpha-D-mannose + GDP + H(+). With respect to regulation, activity is significantly enhanced in the presence of Mg(2+). In terms of biological role, glycosyltransferase involved in the biosynthesis of 3-O-methylmannose polysaccharides (MMP), which are intracellular polymethylated polysaccharides implicated in the modulation of fatty acid metabolism in non-tuberculous mycobacteria. Highly specific alpha-(1-&gt;4)-mannosyltransferase that can transfer mannose units from GDP-mannose to a wide range of alpha-(1-&gt;4) oligomannosides longer than three mannoses, including all hydrolytic products of MmpH. Can use synthetic trimannosides and tetramannosides as substrates, but not mono- and disaccharides, and is significantly more active with the methylated substrates, preferring the tetramannosides over the trimannosides. The polypeptide is MMP alpha-(1-&gt;4)-mannosyltransferase (Mycolicibacterium hassiacum (strain DSM 44199 / CIP 105218 / JCM 12690 / 3849) (Mycobacterium hassiacum)).